We begin with the raw amino-acid sequence, 246 residues long: E3 ubiquitin ligase TRIM40 (246 aa).

Residues 12–55 form an RING-type zinc finger; sequence CPICLDPLKEAVSTDCRHLFCRMCLTQHMDKASVSGILSCPVCR. Residues 64–105 form a B box-type zinc finger; it reads GDNYICHTHQKRVRRFCEASGHLLCEECLQSPEHQSHTELSI. Residues Cys69, His72, Cys91, and His97 each coordinate Zn(2+). A coiled-coil region spans residues 105–170; it reads IENAISHYKE…DQTKEQLKAL (66 aa).

Belongs to the TRIM/RBCC family. As to quaternary structure, interacts with NEDD8.

It carries out the reaction S-ubiquitinyl-[E2 ubiquitin-conjugating enzyme]-L-cysteine + [acceptor protein]-L-lysine = [E2 ubiquitin-conjugating enzyme]-L-cysteine + N(6)-ubiquitinyl-[acceptor protein]-L-lysine.. In terms of biological role, E3 ubiquitin-protein ligase that plays a role in the limitation of the innate immune response. Mediates inhibition of the RLR signaling pathway by ubiquitinating RIGI and IFIH1 receptors, leading to their proteasomal degradation. Also promotes the neddylation of IKBKG/NEMO, stabilizing NFKBIA, and thereby inhibiting of NF-kappa-B nuclear translocation and activation. This chain is E3 ubiquitin ligase TRIM40 (Trim40), found in Mus musculus (Mouse).